Here is a 189-residue protein sequence, read N- to C-terminus: MALSFSLLMAVLVLSYKSICSLGCDLPQTHSLGNRRALILLGQMGRISPFSCLKDRHDFRIPQEEFDGNQFQKAQAISVLHEMIQQTFNLFSTEDSSAAWEQSLLEKFSTELYQQLNDLEACVIQEVGVEETPLMNEDSILAVRKYFQRITLYLIERKYSPCAWEVVRAEIMRSLSFSTNLQKRLRRKD.

Positions 1–23 (MALSFSLLMAVLVLSYKSICSLG) are cleaved as a signal peptide. Disulfide bonds link Cys24-Cys122 and Cys52-Cys162.

This sequence belongs to the alpha/beta interferon family.

The protein resides in the secreted. Functionally, produced by macrophages, IFN-alpha have antiviral activities. Interferon stimulates the production of two enzymes: a protein kinase and an oligoadenylate synthetase. The chain is Interferon alpha-10 (IFNA10) from Homo sapiens (Human).